We begin with the raw amino-acid sequence, 236 residues long: MQSELQRGFVLHRRPYSETSLLVDLFTEESGRLTVIAKGARAKRSSWKSVLQPFTPLLLRWTGKSTLKTLTKAEPAAITLPLQQIALYSGFYVNELLTRVIESETPNPALFQHYLKCLTGLATETNVEPTLRLFEFQLLQMLGYGVDFLHCAGSGEPVDFSMTYRYREEKGFVASLVKDNLTFYGRDLLAFEALDFSDDAVRQAAKRFTRIALKPYLGDKPLKSRELFTQNILLLK.

This sequence belongs to the RecO family.

Involved in DNA repair and RecF pathway recombination. The chain is DNA repair protein RecO from Haemophilus influenzae (strain 86-028NP).